We begin with the raw amino-acid sequence, 617 residues long: Manganese lipoxygenase (617 aa).

The N-terminal stretch at 1-17 (MRIGLLAFAVAARYVEA) is a signal peptide. The segment covering 23 to 48 (GEEVASSSAPTTLPSTSSSSALPSPT) has biased composition (low complexity). Positions 23–59 (GEEVASSSAPTTLPSTSSSSALPSPTKYTLPHEDPNP) are disordered. N-linked (GlcNAc...) asparagine glycosylation is found at asparagine 109, asparagine 119, and asparagine 160. The Lipoxygenase domain occupies 122 to 617 (LRDIQSHGGL…PAVNPFFLSI (496 aa)). Residues histidine 293, histidine 297, histidine 479, and asparagine 483 each coordinate Mn(2+). Asparagine 547 carries N-linked (GlcNAc...) asparagine glycosylation. Residue isoleucine 617 participates in Mn(2+) binding.

It belongs to the lipoxygenase family. Manganese lipoxygenase subfamily. Mn(2+) serves as cofactor.

It is found in the secreted. The catalysed reaction is (9Z,12Z)-octadecadienoate + O2 = (9S)-hydroperoxy-(10E,12Z)-octadecadienoate. It carries out the reaction (9Z,12Z)-octadecadienoate + O2 = (11S)-hydroperoxy-(9Z,12Z)-octadecadienoate. It catalyses the reaction (9Z,12Z)-octadecadienoate + O2 = (13R)-hydroperoxy-(9Z,11E)-octadecadienoate. The enzyme catalyses (9Z,12Z,15Z)-octadecatrienoate + O2 = (9S)-hydroperoxy-(10E,12Z,15Z)-octadecatrienoate. The catalysed reaction is (9Z,12Z,15Z)-octadecatrienoate + O2 = (11R)-hydroperoxy-(9Z,12Z,15Z)-octadecatrienoate. It carries out the reaction (9Z,12Z,15Z)-octadecatrienoate + O2 = (13R)-hydroperoxy-(9Z,11E,15Z)-octadecatrienoate. Lipoxygenase that metabolizes linoleic and alpha-linolenic acids to 9S-, 11- and 13R-hydroperoxy fatty acids. At the end of lipoxygenation, the intermediate products 11S-HPODE and 13R-HPODE from linoleic acid are then transformed into 9S-HPODE as the final product. The intermediate product 11R-HPOTrE from alpha-linolenic acid is transformed into 9S-HPOTrE and 13R-HPOTrE as the final products. 9S-HPOTrE is further oxidized by the enzyme to 9,16-DiHOTrE as the end product. Also acts on gamma-linolenic acid producing 9-HOTrE(n-6) as the main metabolite. In Nakataea oryzae (Rice stem rot fungus), this protein is Manganese lipoxygenase.